Here is a 207-residue protein sequence, read N- to C-terminus: uncharacterized protein (207 aa).

Belongs to the IIV-6 350L family.

This is an uncharacterized protein from Invertebrate iridescent virus 6 (IIV-6).